Consider the following 194-residue polypeptide: Protein GrpE 2 (194 aa).

Positions Met-1–Asn-17 are enriched in basic and acidic residues. Positions Met-1–Val-29 are disordered. The segment covering Asp-18–Val-29 has biased composition (polar residues).

This sequence belongs to the GrpE family. In terms of assembly, homodimer.

It is found in the cytoplasm. Functionally, participates actively in the response to hyperosmotic and heat shock by preventing the aggregation of stress-denatured proteins, in association with DnaK and GrpE. It is the nucleotide exchange factor for DnaK and may function as a thermosensor. Unfolded proteins bind initially to DnaJ; upon interaction with the DnaJ-bound protein, DnaK hydrolyzes its bound ATP, resulting in the formation of a stable complex. GrpE releases ADP from DnaK; ATP binding to DnaK triggers the release of the substrate protein, thus completing the reaction cycle. Several rounds of ATP-dependent interactions between DnaJ, DnaK and GrpE are required for fully efficient folding. This Buchnera aphidicola subsp. Baizongia pistaciae (strain Bp) protein is Protein GrpE 2.